Here is a 771-residue protein sequence, read N- to C-terminus: Hyperosmolality-gated Ca2+ permeable channel 1.3 (771 aa).

A helical membrane pass occupies residues 7-27 (IGVAAAINILTAIIFLLAFAI). Residue Ser54 is modified to Phosphoserine. 9 helical membrane passes run 101 to 121 (IYLI…SILV), 158 to 178 (FWTH…VLMK), 375 to 395 (LIMH…IAFV), 427 to 447 (FLPG…LMVM), 467 to 487 (YYIF…SAFE), 512 to 532 (ATFF…GEIL), 584 to 604 (PVTP…YLVF), 630 to 650 (IISA…TKGA), and 651 to 671 (AQST…HRYC). Positions 744-771 (VPTKRQSRINTPAVSHASRGSSRSPPSK) are disordered. The segment covering 751–771 (RINTPAVSHASRGSSRSPPSK) has biased composition (polar residues).

The protein belongs to the CSC1 (TC 1.A.17) family. In terms of processing, phosphorylated at Ser-54 by BIK1 in response to pathogen-associated molecular pattern (PAMP) perception, promoting its activation. Preferentially expressed in guard cells.

Its subcellular location is the cell membrane. The catalysed reaction is Ca(2+)(in) = Ca(2+)(out). With respect to regulation, activated following phosphorylation at Ser-54 by BIK1. Its function is as follows. Calcium-permeable channel that plays a key role in plant stomatal immunity. In response to pathogen-associated molecular pattern (PAMP) perception, phosphorylated and activated by BIK1, triggering rapid influx of calcium ions across the plasma membrane, leading to stomatal closure. This chain is Hyperosmolality-gated Ca2+ permeable channel 1.3, found in Arabidopsis thaliana (Mouse-ear cress).